An 886-amino-acid chain; its full sequence is Protein suppressor of hairy wing (886 aa).

2 disordered regions span residues 24-62 and 167-211; these read SVSPSKDKRPTRMKLLNNLSASSPQTYPPKTDKRSGIKG and DEVV…KNSG. The span at 184–201 shows a compositional bias: acidic residues; it reads VTEEEEEEEEDDLDEEGD. Residues 221-243 form a C2H2-type 1; atypical zinc finger; it reads HVCGKCYKTFRRLMSLKKHLEFC. Residues 291-314 form a C2H2-type 2 zinc finger; it reads INCPDCPKSFKTQTSYERHIFITH. A C2H2-type 3; atypical zinc finger spans residues 320–342; the sequence is YPCSICNANLRSEALLKLHEEQH. 9 consecutive C2H2-type zinc fingers follow at residues 349-367, 381-403, 414-436, 442-464, 470-492, 498-520, 524-546, 554-578, and 600-623; these read YACKICGKDFTRSYHLKRH, MSCKVCDRVFYRLDNLRSHLKHH, YMCHVCKNCFYSLSTLNIHIRTH, FDCDLCDKKLSALVALKKHRRYH, YSCTVCNQAFAVKEVLNRHMKRH, HKCEECGKSFIQATQLRTHSKTH, FACDMCEEKFKTEKQLERHVKEH, FSCTECKRHFRNTAQLKQHMDAGDH, and TDCAICDKNFDSSETLRKHIRSVH. Over residues 571-587 the composition is skewed to basic and acidic residues; sequence QHMDAGDHSEKSGEKPQ. A disordered region spans residues 571–594; the sequence is QHMDAGDHSEKSGEKPQRAKRSST.

The protein localises to the nucleus. Component of the gypsy chromatin insulator complex which is required for the function of the gypsy chromatin insulator and other endogenous chromatin insulators. Chromatin insulators are regulatory elements which establish independent domains of transcriptional activity within eukaryotic genomes. Insulators have two defining properties; they can block the communication between an enhancer and a promoter when placed between them and can also buffer transgenes from position effect variegation (PEV). Insulators are proposed to structure the chromatin fiber into independent domains of differing transcriptional potential by promoting the formation of distinct chromatin loops. This chromatin looping may involve the formation of insulator bodies, where homotypic interactions between individual subunits of the insulator complex could promote the clustering of widely spaced insulators at the nuclear periphery. Within the gypsy insulator complex, this protein binds specifically to a region of the gypsy element located 3' of the 5' long terminal repeat (LTR), and may also mediate interaction with other endogenous insulators at sites distinct from those recognized by Cp190. Cooperates with pita and cliff to recruit Cp190 and regulate insulator function at the front-ultraabdominal (Fub) boundary. The protein is Protein suppressor of hairy wing (su(Hw)) of Drosophila ananassae (Fruit fly).